We begin with the raw amino-acid sequence, 181 residues long: ATP synthase subunit delta (181 aa).

The protein belongs to the ATPase delta chain family. As to quaternary structure, F-type ATPases have 2 components, F(1) - the catalytic core - and F(0) - the membrane proton channel. F(1) has five subunits: alpha(3), beta(3), gamma(1), delta(1), epsilon(1). F(0) has three main subunits: a(1), b(2) and c(10-14). The alpha and beta chains form an alternating ring which encloses part of the gamma chain. F(1) is attached to F(0) by a central stalk formed by the gamma and epsilon chains, while a peripheral stalk is formed by the delta and b chains.

It localises to the cell membrane. In terms of biological role, f(1)F(0) ATP synthase produces ATP from ADP in the presence of a proton or sodium gradient. F-type ATPases consist of two structural domains, F(1) containing the extramembraneous catalytic core and F(0) containing the membrane proton channel, linked together by a central stalk and a peripheral stalk. During catalysis, ATP synthesis in the catalytic domain of F(1) is coupled via a rotary mechanism of the central stalk subunits to proton translocation. This protein is part of the stalk that links CF(0) to CF(1). It either transmits conformational changes from CF(0) to CF(1) or is implicated in proton conduction. This chain is ATP synthase subunit delta, found in Shouchella clausii (strain KSM-K16) (Alkalihalobacillus clausii).